Here is a 319-residue protein sequence, read N- to C-terminus: Acetyl-coenzyme A carboxylase carboxyl transferase subunit alpha (319 aa).

A CoA carboxyltransferase C-terminal domain is found at 39–293 (RLQKKSNDLT…KAVLEKQLHE (255 aa)).

This sequence belongs to the AccA family. As to quaternary structure, acetyl-CoA carboxylase is a heterohexamer composed of biotin carboxyl carrier protein (AccB), biotin carboxylase (AccC) and two subunits each of ACCase subunit alpha (AccA) and ACCase subunit beta (AccD).

The protein resides in the cytoplasm. The catalysed reaction is N(6)-carboxybiotinyl-L-lysyl-[protein] + acetyl-CoA = N(6)-biotinyl-L-lysyl-[protein] + malonyl-CoA. The protein operates within lipid metabolism; malonyl-CoA biosynthesis; malonyl-CoA from acetyl-CoA: step 1/1. Its function is as follows. Component of the acetyl coenzyme A carboxylase (ACC) complex. First, biotin carboxylase catalyzes the carboxylation of biotin on its carrier protein (BCCP) and then the CO(2) group is transferred by the carboxyltransferase to acetyl-CoA to form malonyl-CoA. The polypeptide is Acetyl-coenzyme A carboxylase carboxyl transferase subunit alpha (Neisseria meningitidis serogroup B (strain ATCC BAA-335 / MC58)).